A 490-amino-acid chain; its full sequence is Cobyric acid synthase (490 aa).

Residues 252 to 439 (RLKVVVPVLP…LHGLFESTAA (188 aa)) enclose the GATase cobBQ-type domain. The Nucleophile role is filled by cysteine 333. The active site involves histidine 431.

Belongs to the CobB/CobQ family. CobQ subfamily.

Its pathway is cofactor biosynthesis; adenosylcobalamin biosynthesis. Catalyzes amidations at positions B, D, E, and G on adenosylcobyrinic A,C-diamide. NH(2) groups are provided by glutamine, and one molecule of ATP is hydrogenolyzed for each amidation. This is Cobyric acid synthase from Pseudomonas paraeruginosa (strain DSM 24068 / PA7) (Pseudomonas aeruginosa (strain PA7)).